Reading from the N-terminus, the 779-residue chain is Lon protease (779 aa).

The Lon N-terminal domain occupies 7 to 190 (VPVLFLNDSI…LLIGWTGDHL (184 aa)). 352-359 (GPPGVGKT) lines the ATP pocket. One can recognise a Lon proteolytic domain in the interval 589-769 (TAVPGVATGL…ADIIAAALEP (181 aa)). Catalysis depends on residues Ser675 and Lys718.

The protein belongs to the peptidase S16 family. Homohexamer. Organized in a ring with a central cavity. Oligomerization is Mg(2+)-dependent.

The protein resides in the cytoplasm. It catalyses the reaction Hydrolysis of proteins in presence of ATP.. Stimulated by unfolded protein. Its function is as follows. ATP-dependent serine protease that mediates the selective degradation of mutant and abnormal proteins as well as certain short-lived regulatory proteins. Required for cellular homeostasis and for survival from DNA damage and developmental changes induced by stress. Degrades polypeptides processively to yield small peptide fragments that are 5 to 10 amino acids long. Binds to DNA in a double-stranded, site-specific manner. The polypeptide is Lon protease (Mycolicibacterium smegmatis (Mycobacterium smegmatis)).